The sequence spans 362 residues: Chorismate synthase (362 aa).

Arg46 contacts NADP(+). FMN contacts are provided by residues 122–124 (RSS), 238–239 (NA), Gly278, 293–297 (KPTPS), and Arg319.

It belongs to the chorismate synthase family. As to quaternary structure, homotetramer. It depends on FMNH2 as a cofactor.

It catalyses the reaction 5-O-(1-carboxyvinyl)-3-phosphoshikimate = chorismate + phosphate. The protein operates within metabolic intermediate biosynthesis; chorismate biosynthesis; chorismate from D-erythrose 4-phosphate and phosphoenolpyruvate: step 7/7. Functionally, catalyzes the anti-1,4-elimination of the C-3 phosphate and the C-6 proR hydrogen from 5-enolpyruvylshikimate-3-phosphate (EPSP) to yield chorismate, which is the branch point compound that serves as the starting substrate for the three terminal pathways of aromatic amino acid biosynthesis. This reaction introduces a second double bond into the aromatic ring system. The polypeptide is Chorismate synthase (Campylobacter jejuni (strain RM1221)).